Consider the following 175-residue polypeptide: Adenylate kinase isoenzyme 6 homolog (175 aa).

The ATP site is built by Gly17, Gly19, Lys20, Thr21, and Ser22. The interval 37–60 (DISSAVKEKELHDGWDSEFQCYIL) is NMPbind. The tract at residues 112–122 (KRNYNQHKITN) is LID. Arg113 serves as a coordination point for ATP.

It belongs to the adenylate kinase family. AK6 subfamily. In terms of assembly, monomer and homodimer. Interacts with small ribosomal subunit protein uS11. Not a structural component of 43S pre-ribosomes, but transiently interacts with them by binding to uS11.

Its subcellular location is the cytoplasm. It localises to the nucleus. The catalysed reaction is AMP + ATP = 2 ADP. It catalyses the reaction ATP + H2O = ADP + phosphate + H(+). Broad-specificity nucleoside monophosphate (NMP) kinase that catalyzes the reversible transfer of the terminal phosphate group between nucleoside triphosphates and monophosphates. Also has ATPase activity. Involved in the late cytoplasmic maturation steps of the 40S ribosomal particles, specifically 18S rRNA maturation. While NMP activity is not required for ribosome maturation, ATPase activity is. Associates transiently with small ribosomal subunit protein uS11. ATP hydrolysis breaks the interaction with uS11. May temporarily remove uS11 from the ribosome to enable a conformational change of the ribosomal RNA that is needed for the final maturation step of the small ribosomal subunit. Its NMP activity may have a role in nuclear energy homeostasis. The sequence is that of Adenylate kinase isoenzyme 6 homolog from Dictyostelium discoideum (Social amoeba).